Here is a 276-residue protein sequence, read N- to C-terminus: Dermonecrotic toxin LlSicTox-alphaIV2ii (276 aa).

The active site involves His5. Mg(2+) contacts are provided by Glu25 and Asp27. His41 (nucleophile) is an active-site residue. 2 disulfides stabilise this stretch: Cys45/Cys51 and Cys47/Cys193. A Mg(2+)-binding site is contributed by Asp85.

The protein belongs to the arthropod phospholipase D family. Class II subfamily. Mg(2+) is required as a cofactor. Expressed by the venom gland.

It is found in the secreted. The enzyme catalyses an N-(acyl)-sphingosylphosphocholine = an N-(acyl)-sphingosyl-1,3-cyclic phosphate + choline. It catalyses the reaction an N-(acyl)-sphingosylphosphoethanolamine = an N-(acyl)-sphingosyl-1,3-cyclic phosphate + ethanolamine. It carries out the reaction a 1-acyl-sn-glycero-3-phosphocholine = a 1-acyl-sn-glycero-2,3-cyclic phosphate + choline. The catalysed reaction is a 1-acyl-sn-glycero-3-phosphoethanolamine = a 1-acyl-sn-glycero-2,3-cyclic phosphate + ethanolamine. Functionally, dermonecrotic toxins cleave the phosphodiester linkage between the phosphate and headgroup of certain phospholipids (sphingolipid and lysolipid substrates), forming an alcohol (often choline) and a cyclic phosphate. This toxin acts on sphingomyelin (SM). It may also act on ceramide phosphoethanolamine (CPE), lysophosphatidylcholine (LPC) and lysophosphatidylethanolamine (LPE), but not on lysophosphatidylserine (LPS), and lysophosphatidylglycerol (LPG). It acts by transphosphatidylation, releasing exclusively cyclic phosphate products as second products. Induces dermonecrosis, hemolysis, increased vascular permeability, edema, inflammatory response, and platelet aggregation. In Loxosceles laeta (South American recluse spider), this protein is Dermonecrotic toxin LlSicTox-alphaIV2ii.